Reading from the N-terminus, the 1366-residue chain is DNA-directed RNA polymerase subunit beta (1366 aa).

The protein belongs to the RNA polymerase beta chain family. As to quaternary structure, the RNAP catalytic core consists of 2 alpha, 1 beta, 1 beta' and 1 omega subunit. When a sigma factor is associated with the core the holoenzyme is formed, which can initiate transcription.

The enzyme catalyses RNA(n) + a ribonucleoside 5'-triphosphate = RNA(n+1) + diphosphate. Its function is as follows. DNA-dependent RNA polymerase catalyzes the transcription of DNA into RNA using the four ribonucleoside triphosphates as substrates. The polypeptide is DNA-directed RNA polymerase subunit beta (Marinomonas sp. (strain MWYL1)).